Consider the following 1368-residue polypeptide: MSACSDFVEHIWKPGSCKNCFCLRSDHQLTAGHPKARASSLPAGARLPARPEICRLEDEGVNGLAYSKPTIAVKPTMMTSETADLWTEASLSAEVPKVNWRRTPGKLLLQKQEDGPIVYLGSFRGMQKAAGPLACTDSNSRCPPAYTMVGLHNLEARVDRNTALQPVNFQEEKAGREELPSAQESFRQKLAAFTGMTSSCLKGPRPCTSPQPLRESLPSEDDSDQRCSPSGDSEGGEYCSILDCRPESRDAVHNTEGSGRRRGDCSPICWEQGTCTRPTEEEKQALNFPRECCGQGSTANPPHLGPKKPSLNSEAASSSDGLSCGSSRSGANSPFAPHLENDYCSLVKEPTSVKQQDSGCHLVNSGKYVGQAVDLQPPALPREAVQPEPIYAESAKRKKAAPVPQRPEPKKEQVSSGQVWTGDTWSQKTPSGWSQEREGPNAAPQVATTITVIAAHPEEDHRTIYLSSPDSAVGVQWPRGSLNQDLHGSGEEPLVVQGLSSRESHPHNMTENSSKEKPAIPPKLSKSSPGGSPVSPAAPPLTDHSDGNTSGSSVGSQPSSRVPTNLTSSCQTNGVAAGDPAKCPPQANSSVLDQRRPRYQTGAWSRQCRIEEEEEVGQELLSQSWGRELENGIADHSNSSTWHRLHPIDGASGQNGKTNSGMSKSASFAFEFPKDRGRLESFSPPPPPPKSRHLLKMNKSSSDLEKVSQSSAESLSPSFRGAHVSFTTGSTDSLASDSRTCSDGGPSCEATHSPTISGKKLFAPVPFPSGSTEDVSPSGPAQPPPLPQKKIVSRAASSPDGFFWTQGSPKPRTASPKLNLSHSETNVCAHDEPPLSYSLNSGNHPHHVFSSSEPLEKAFKGSVPWAPALGPANSKGGCGSPNLQGRAATSTSSSQLSVSSQASTGSSQLQLHSLLSSISSKEGTYAKLGGLYTQSLARLVTKCEDLFMGGLKTELRFDENSWSLFKLICNKPCCDSGDAIYYGATCSKDPDSIYAVKICKTPEPKSASYCSPSVPVHFNIQQDCGHFVASVPSSMLAFPDTSSKDPAPAAPSHTPAQEQDCVVVITREVPHQTASDFVRDSVASHRAEPEVYERRVCFLLLQLCNGLEHLKEHGIIHRDLCLENLLLVHCNPQSSPGPSANPSVPTTTSRCPSAAPAATTACQGGPGEKHLPRLIISNFLKAKQKPGGTTNLQQKKSQARLAPEIVSASQYRKFDEFQTGILIYELLHQPNPFEVRAQLRERDYRREDLPPLPTLSLYSPGLQQLAHLLLEADPIKRIRIGEAKRVLQCLLWGPRRELVEQPCPSEEVLCNTLHNWIDMKRALMMMKFAEKAVERRRGVELEDWLCCQYLASAEPGALLQSLKLLQLL.

Positions 200-236 are disordered; sequence CLKGPRPCTSPQPLRESLPSEDDSDQRCSPSGDSEGG. Residue Tyr-238 is modified to Phosphotyrosine; by CSK. The interval 297–330 is disordered; that stretch reads STANPPHLGPKKPSLNSEAASSSDGLSCGSSRSG. The span at 317–330 shows a compositional bias: low complexity; that stretch reads SSSDGLSCGSSRSG. Phosphotyrosine; by CSK is present on residues Tyr-343 and Tyr-391. Disordered stretches follow at residues 392–443, 499–605, and 636–792; these read AESA…PNAA, LSSR…GAWS, and HSNS…KKIV. Polar residues predominate over residues 414 to 434; sequence VSSGQVWTGDTWSQKTPSGWS. The span at 502 to 518 shows a compositional bias: basic and acidic residues; it reads RESHPHNMTENSSKEKP. Low complexity-rich tracts occupy residues 522 to 535 and 550 to 563; these read PKLS…SPVS and SGSS…SRVP. Polar residues-rich tracts occupy residues 564 to 574 and 652 to 666; these read TNLTSSCQTNG and SGQN…SKSA. 2 positions are modified to phosphoserine: Ser-667 and Ser-716. 2 stretches are compositionally biased toward polar residues: residues 707-717 and 725-741; these read VSQSSAESLSP and SFTT…SRTC. Phosphoserine occurs at positions 753 and 797. Disordered stretches follow at residues 799–818 and 873–901; these read PDGF…SPKL and NSKG…VSSQ. Positions 887–901 are enriched in low complexity; sequence AATSTSSSQLSVSSQ. Residues 906–949 are required for homodimerization; the sequence is SSQLQLHSLLSSISSKEGTYAKLGGLYTQSLARLVTKCEDLFMG. A Protein kinase domain is found at 940 to 1291; that stretch reads VTKCEDLFMG…EAKRVLQCLL (352 aa). Polar residues predominate over residues 1134-1144; it reads SSPGPSANPSV. Positions 1134-1166 are disordered; the sequence is SSPGPSANPSVPTTTSRCPSAAPAATTACQGGP. Residues 1145–1162 are compositionally biased toward low complexity; sequence PTTTSRCPSAAPAATTAC. The tract at residues 1293–1368 is required for homodimerization; the sequence is GPRRELVEQP…LQSLKLLQLL (76 aa).

This sequence belongs to the protein kinase superfamily. Homodimer. Dimerization leads to the catalytic activation of CSK. Interacts (via C-terminus) with RND2. Interacts with CSK (via SH2 domain) in a Tyr-391 phosphorylation-dependent manner; this interaction potentiates kinase activity of CSK. Interacts with NOTCH1 intracellular domain (N1ICD). Forms a complex with N1ICD and MAML1, in a MAML1-dependent manner. In terms of processing, phosphorylated by CSK on Tyr-238, Tyr-343, and Tyr-391; Tyr-391 is a primary site of phosphorylation. As to expression, highly-expressed in brain, including cortical and hippocampal pyramidal neurons, as well as in kidney, spleen, colon and small intestine.

It is found in the cytoplasm. The protein localises to the nucleus. The protein resides in the cell junction. Its subcellular location is the focal adhesion. Catalytically inactive protein kinase that acts as a scaffold protein. Functions as an effector of the small GTPase RND2, which stimulates RhoA activity and inhibits NGF-induced neurite outgrowth. Promotes Src family kinase (SFK) signallig by regulating the subcellular localization of CSK, a negative regulator of these kinases, leading to the regulation of cell morphology and motility by a CSK-dependent mechanism. Acts as a critical coactivator of Notch signaling. In Rattus norvegicus (Rat), this protein is Inactive tyrosine-protein kinase PRAG1.